We begin with the raw amino-acid sequence, 343 residues long: Methionine import ATP-binding protein MetN 1 (343 aa).

Residues 2–241 (IKLSNITKVF…PKTPLAQKFI (240 aa)) form the ABC transporter domain. 38 to 45 (GASGAGKS) is an ATP binding site.

Belongs to the ABC transporter superfamily. Methionine importer (TC 3.A.1.24) family. The complex is composed of two ATP-binding proteins (MetN), two transmembrane proteins (MetI) and a solute-binding protein (MetQ).

It is found in the cell inner membrane. It carries out the reaction L-methionine(out) + ATP + H2O = L-methionine(in) + ADP + phosphate + H(+). The enzyme catalyses D-methionine(out) + ATP + H2O = D-methionine(in) + ADP + phosphate + H(+). Part of the ABC transporter complex MetNIQ involved in methionine import. Responsible for energy coupling to the transport system. The polypeptide is Methionine import ATP-binding protein MetN 1 (Salmonella choleraesuis (strain SC-B67)).